The sequence spans 337 residues: uncharacterized protein (337 aa).

Helical transmembrane passes span 241–261 (FTLL…GAFI) and 273–293 (ASLI…IGII).

Belongs to the glycosyltransferase 2 family.

The protein resides in the cell membrane. This is an uncharacterized protein from Bacillus subtilis (strain 168).